We begin with the raw amino-acid sequence, 233 residues long: Glucosamine-6-phosphate deaminase (233 aa).

D62 acts as the Proton acceptor; for enolization step in catalysis. The active-site For ring-opening step is the N128. H130 acts as the Proton acceptor; for ring-opening step in catalysis. The active-site For ring-opening step is E135.

It belongs to the glucosamine/galactosamine-6-phosphate isomerase family. NagB subfamily.

It catalyses the reaction alpha-D-glucosamine 6-phosphate + H2O = beta-D-fructose 6-phosphate + NH4(+). It functions in the pathway amino-sugar metabolism; N-acetylneuraminate degradation; D-fructose 6-phosphate from N-acetylneuraminate: step 5/5. In terms of biological role, catalyzes the reversible isomerization-deamination of glucosamine 6-phosphate (GlcN6P) to form fructose 6-phosphate (Fru6P) and ammonium ion. The sequence is that of Glucosamine-6-phosphate deaminase from Enterococcus faecalis (strain ATCC 700802 / V583).